Reading from the N-terminus, the 359-residue chain is Peptide chain release factor 1 (359 aa).

Glutamine 235 bears the N5-methylglutamine mark. The tract at residues 287–312 (AQEASAMRSAQVGSGDRSERIRTYNF) is disordered.

The protein belongs to the prokaryotic/mitochondrial release factor family. Post-translationally, methylated by PrmC. Methylation increases the termination efficiency of RF1.

The protein resides in the cytoplasm. Functionally, peptide chain release factor 1 directs the termination of translation in response to the peptide chain termination codons UAG and UAA. This is Peptide chain release factor 1 from Chlamydia trachomatis serovar L2 (strain ATCC VR-902B / DSM 19102 / 434/Bu).